Consider the following 88-residue polypeptide: Apolipoprotein C-I (88 aa).

Positions 1–26 (MRLILSLPVLVVVLSMVLEGPAPAQA) are cleaved as a signal peptide.

It belongs to the apolipoprotein C1 family. In terms of tissue distribution, expressed in the liver.

The protein localises to the secreted. In terms of biological role, inhibitor of lipoprotein binding to the low density lipoprotein (LDL) receptor, LDL receptor-related protein, and very low density lipoprotein (VLDL) receptor. Associates with high density lipoproteins (HDL) and the triacylglycerol-rich lipoproteins in the plasma and makes up about 10% of the protein of the VLDL and 2% of that of HDL. Appears to interfere directly with fatty acid uptake and is also the major plasma inhibitor of cholesteryl ester transfer protein (CETP). Binds free fatty acids and reduces their intracellular esterification. Modulates the interaction of APOE with beta-migrating VLDL and inhibits binding of beta-VLDL to the LDL receptor-related protein. The chain is Apolipoprotein C-I (APOC1) from Canis lupus familiaris (Dog).